Reading from the N-terminus, the 405-residue chain is ATP-sensitive inward rectifier potassium channel 15 (405 aa).

At M1–D90 the chain is on the cytoplasmic side. The chain crosses the membrane as a helical span at residues M91–A117. The Extracellular portion of the chain corresponds to I118–S143. Residues L144 to Y160 constitute an intramembrane region (helical; Pore-forming). A Selectivity filter motif is present at residues T157–V162. Residues G161 to C169 lie on the Extracellular side of the membrane. A helical membrane pass occupies residues P170–L195. The Cytoplasmic portion of the chain corresponds to A196 to V405.

It belongs to the inward rectifier-type potassium channel (TC 1.A.2.1) family. KCNJ15 subfamily. As to quaternary structure, can form heteromultimeric channels with Kir5.1/KCNJ16. Interacts with PATJ.

The protein resides in the membrane. It is found in the cell membrane. The catalysed reaction is K(+)(in) = K(+)(out). Its activity is regulated as follows. Channel activity is regulated by variations of cytosolic pH; reversibly inhibited by acidic pH values. Inhibited by Ba(2+) and Cs(+) in a voltage-dependent manner. Functionally, inward rectifier potassium channels are characterized by a greater tendency to allow potassium to flow into the cell rather than out of it. Their voltage dependence is regulated by the concentration of extracellular potassium; as external potassium is raised, the voltage range of the channel opening shifts to more positive voltages. The inward rectification is mainly due to the blockage of outward current by internal magnesium. This chain is ATP-sensitive inward rectifier potassium channel 15 (Kcnj15), found in Rattus norvegicus (Rat).